A 1066-amino-acid polypeptide reads, in one-letter code: Beta-galactosidase (1066 aa).

Substrate contacts are provided by Asn-110 and Asp-209. Asp-209 serves as a coordination point for Na(+). Residues Glu-432, His-434, and Glu-477 each coordinate Mg(2+). Substrate-binding positions include Glu-477 and 553-556; that span reads EYAH. Residue Glu-477 is the Proton donor of the active site. The active-site Nucleophile is the Glu-553. Asn-613 provides a ligand contact to Mg(2+). Residues Phe-617 and Asn-620 each contribute to the Na(+) site. Substrate-binding residues include Asn-620 and Trp-1041.

Belongs to the glycosyl hydrolase 2 family. As to quaternary structure, homotetramer. Mg(2+) is required as a cofactor. The cofactor is Na(+).

The enzyme catalyses Hydrolysis of terminal non-reducing beta-D-galactose residues in beta-D-galactosides.. In Yersinia pseudotuberculosis serotype O:1b (strain IP 31758), this protein is Beta-galactosidase.